The sequence spans 100 residues: MLSSVALRYLLVLSLAFLAVVTSSRTQSRFASYELMGTEGTECVTTKTISQICYQCATRHEDSFVQVYQECCKKEMGLREYCEEIYTELPIRSGLWQPNK.

The N-terminal stretch at 1–23 is a signal peptide; it reads MLSSVALRYLLVLSLAFLAVVTS.

Three disulfide bonds are present. In terms of tissue distribution, expressed by the yellow cells, peptidergic (neuroendocrine) neurons of the central nervous system.

Stimulates integumental Na(+) uptake. Controls the activity of sodium pumps in the integument, pericardium, ureter and nephridial gland. The polypeptide is Sodium-influx-stimulating peptide (SIS) (Lymnaea stagnalis (Great pond snail)).